The following is a 1132-amino-acid chain: MADENETVVSAPVSTAAWIYVFPKDKELLDVLSVLSLMERNSPIVISPLLMNLTVENDFSTTVKTPITNFGGTILTKITSFMPVCFFFHGTEQLVGMAEDHGDLIRLCEQTRQKFHLQSFEVPTARKVIDIKALCSAVGKDADSVICHVACGNGFKELLFAGLLIPCVEEQIQVQVGEYSCVKIPLYSATLFETEETISLSSCTEFIQERGFFLPALSETLFYYVFTSWGTTLRFSNTKELIDAGLKQFTQDGEQTVKLAPHKTYLGISGQKISAVEKDFLMLVDSVVTELSFSHVAEYLDSVYDPSQIMNFNDWPIIRNSETHAERMAQLTNLKLHLSSHLAVLIFAPNSILYCSKLAFIPNVKQAFNSVMTQELLLRSLSFCNALSSLSDDVYNDNRKIIKCDSTSGKDDKFSANHLAYACATSPQLLSFVVWNLNRMSVYNAGNAHTEIYNHLVNCSANLCEFCDGKCCQSCIGTAMVRVGTRLPAIPKNVKKEPLVMSMFSRYYAEVDILGSFGRKPVSELKEIGKDQQNTLSLDRGKFVSQIFDYCKKNSLIDPVTGEDTFNVRSKKDFVSIIHGLTQCIEECVSRCIVEMRRTQTPREQIENCLQSFNVDTTPYATAFSPFLTFSYYKVILTVLQNLALIVASGHVVDRPCTGNSISKWLVQQYQSLYGTFHSSYLKKGFLNTRTVKVASNVDMEQILDCDLYKSGKYVKTTIQAKLCRLSMQCLRDFRIKNRPFNKSSKTAHNNPYFKKNVKHKKNPLSGCISFLLFKYHDKLFPNVKISCLELWQRFLLNNVPKTLDIGNPEEVKTFIKFAFSITNTYDEIDIIDIQPECLSTFIDCYFHNKFLSALGFHDYLTSLHGLTSKLVTQNPVLFPVVLDKQPKFSSIQEYLVYVKKLVLDGVPNPVIASLSKEPNFGTIFTSRSLVTFGLTLEKFVSLANREYFQFGQLGWIGGSGVDRNLNPTSSALQDFRFMRQKTIIATKFSEVIVKKVRREAIMFDTEVVKGKVLSIVENLTNDIDPELLIIAEVMRDREDKPTMDDMLFFVDGREALAASIMLKLNHLVDMNVKDFSITNLQSVFETVSSNDAPVYDFSEILAEEDDQGNGVLKCDETETETDEPMTKKNRL.

The interval 1112 to 1132 (VLKCDETETETDEPMTKKNRL) is required for nuclear localization.

This sequence belongs to the herpesviridae major DNA-binding protein family. In terms of assembly, homooligomers. Forms double-helical filaments necessary for the formation of replication compartments within the host nucleus. Interacts with the origin-binding protein. Interacts with the helicase primase complex; this interaction stimulates primer synthesis activity of the helicase-primase complex. Interacts with the DNA polymerase. Interacts with the alkaline exonuclease; this interaction increases its nuclease processivity.

It is found in the host nucleus. Single-stranded DNA-binding protein required for DNA replication. Its function is as follows. Plays several crucial roles in viral infection. Participates in the opening of the viral DNA origin to initiate replication by interacting with the origin-binding protein. May disrupt loops, hairpins and other secondary structures present on ssDNA to reduce and eliminate pausing of viral DNA polymerase at specific sites during elongation. Promotes viral DNA recombination by performing strand-transfer, characterized by the ability to transfer a DNA strand from a linear duplex to a complementary single-stranded DNA circle. Can also catalyze the renaturation of complementary single strands. Additionally, reorganizes the host cell nucleus, leading to the formation of prereplicative sites and replication compartments. This process is driven by the protein which can form double-helical filaments in the absence of DNA. The chain is Major DNA-binding protein from Human herpesvirus 6A (strain Uganda-1102) (HHV-6 variant A).